Consider the following 186-residue polypeptide: UPF0340 protein SEQ_1951 (186 aa).

This sequence belongs to the UPF0340 family.

The sequence is that of UPF0340 protein SEQ_1951 from Streptococcus equi subsp. equi (strain 4047).